A 220-amino-acid polypeptide reads, in one-letter code: Probable nicotinate-nucleotide adenylyltransferase (220 aa).

The protein belongs to the NadD family.

It catalyses the reaction nicotinate beta-D-ribonucleotide + ATP + H(+) = deamido-NAD(+) + diphosphate. It participates in cofactor biosynthesis; NAD(+) biosynthesis; deamido-NAD(+) from nicotinate D-ribonucleotide: step 1/1. Its function is as follows. Catalyzes the reversible adenylation of nicotinate mononucleotide (NaMN) to nicotinic acid adenine dinucleotide (NaAD). This chain is Probable nicotinate-nucleotide adenylyltransferase, found in Laribacter hongkongensis (strain HLHK9).